A 144-amino-acid chain; its full sequence is Large ribosomal subunit protein uL15 (144 aa).

The interval 1 to 53 (MRLNTLSPAEGAKHAPKRLGRGIGSGLGKTGGRGHKGQKSRSGGGVRRGFEGG) is disordered. Residues 21 to 31 (RGIGSGLGKTG) are compositionally biased toward gly residues.

Belongs to the universal ribosomal protein uL15 family. In terms of assembly, part of the 50S ribosomal subunit.

Its function is as follows. Binds to the 23S rRNA. This chain is Large ribosomal subunit protein uL15, found in Pectobacterium carotovorum subsp. carotovorum (strain PC1).